The sequence spans 614 residues: Putative N(6)-adenosine-methyltransferase MT-A70-like (614 aa).

A disordered region spans residues 59–78 (TPPLTNFNPPKSSSLQQLPQ). Residues 67-78 (PPKSSSLQQLPQ) show a composition bias toward low complexity. S-adenosyl-L-methionine-binding positions include 391–392 (DI) and D409. The positively charged region required for RNA-binding stretch occupies residues 479–492 (RIIRTGRTGHWLNH). S-adenosyl-L-methionine is bound by residues K526, 549–552 (RMHN), and 562–563 (NQ). Residues 589–614 (PASPSRASAMELDSSVAAQTTTSAMM) form a disordered region. Positions 604 to 614 (VAAQTTTSAMM) are enriched in polar residues.

This sequence belongs to the MT-A70-like family.

It is found in the nucleus. It catalyses the reaction an adenosine in mRNA + S-adenosyl-L-methionine = an N(6)-methyladenosine in mRNA + S-adenosyl-L-homocysteine + H(+). Its function is as follows. Putative N6-methyltransferase that methylates adenosine residues of some mRNAs. N6-methyladenosine (m6A), which is present at internal sites of some mRNAs, may play a role in the efficiency of mRNA splicing, transport or translation. This Medicago truncatula (Barrel medic) protein is Putative N(6)-adenosine-methyltransferase MT-A70-like.